The chain runs to 396 residues: L-lactate dehydrogenase (396 aa).

The FMN hydroxy acid dehydrogenase domain occupies 1–380 (MIISAASDYR…SGDSLVQELG (380 aa)). Residue tyrosine 24 participates in substrate binding. FMN is bound by residues serine 106 and glutamine 127. Tyrosine 129 serves as a coordination point for substrate. Threonine 155 contributes to the FMN binding site. Residue arginine 164 participates in substrate binding. Lysine 251 contributes to the FMN binding site. Histidine 275 serves as the catalytic Proton acceptor. A substrate-binding site is contributed by arginine 278. 306–330 (DSGIRNGLDVVRMIALGADTVLLGR) is a binding site for FMN.

This sequence belongs to the FMN-dependent alpha-hydroxy acid dehydrogenase family. It depends on FMN as a cofactor.

Its subcellular location is the cell inner membrane. The enzyme catalyses (S)-lactate + A = pyruvate + AH2. Functionally, catalyzes the conversion of L-lactate to pyruvate. Is coupled to the respiratory chain. The chain is L-lactate dehydrogenase from Salmonella enteritidis PT4 (strain P125109).